We begin with the raw amino-acid sequence, 449 residues long: Trigger factor (449 aa).

In terms of domain architecture, PPIase FKBP-type spans 169-254 (GDRITVDFVG…AKQVEAPGEL (86 aa)).

The protein belongs to the FKBP-type PPIase family. Tig subfamily.

Its subcellular location is the cytoplasm. The catalysed reaction is [protein]-peptidylproline (omega=180) = [protein]-peptidylproline (omega=0). Involved in protein export. Acts as a chaperone by maintaining the newly synthesized protein in an open conformation. Functions as a peptidyl-prolyl cis-trans isomerase. This chain is Trigger factor, found in Azorhizobium caulinodans (strain ATCC 43989 / DSM 5975 / JCM 20966 / LMG 6465 / NBRC 14845 / NCIMB 13405 / ORS 571).